Here is a 319-residue protein sequence, read N- to C-terminus: 2-oxoglutarate and iron-dependent oxygenase domain-containing protein 3 (319 aa).

Residues 1-34 are disordered; sequence MAPQRRAATKAPEGNGAAERRNRSSTKKDRAPRE. At 1–42 the chain is on the cytoplasmic side; it reads MAPQRRAATKAPEGNGAAERRNRSSTKKDRAPREVQRLWQRP. Over residues 18–34 the composition is skewed to basic and acidic residues; it reads AERRNRSSTKKDRAPRE. Residues 43–65 traverse the membrane as a helical; Signal-anchor for type II membrane protein segment; it reads WLRTAGLGAGFVLTALLLWSSLG. Residues 66-319 are Lumenal-facing; the sequence is ADDGVAEVLA…DHGIEDPAFP (254 aa). In terms of domain architecture, Fe2OG dioxygenase spans 207–309; sequence KPTFFSRINS…AITIAFSCNP (103 aa). N-linked (GlcNAc...) asparagine glycosylation occurs at Asn215. Fe cation contacts are provided by His230, Asp232, and His288. Arg298 is an active-site residue. Position 298 (Arg298) interacts with 2-oxoglutarate.

Belongs to the OGFOD3 family. The cofactor is Fe(2+). Requires L-ascorbate as cofactor.

The protein resides in the membrane. The protein is 2-oxoglutarate and iron-dependent oxygenase domain-containing protein 3 (OGFOD3) of Homo sapiens (Human).